The following is a 288-amino-acid chain: N-acetylneuraminate lyase (288 aa).

Aceneuramate is bound by residues Ser44 and Thr45. Tyr133 functions as the Proton donor in the catalytic mechanism. Lys161 (schiff-base intermediate with substrate) is an active-site residue. Positions 163, 185, 187, 188, and 204 each coordinate aceneuramate.

The protein belongs to the DapA family. NanA subfamily. Homotetramer.

It localises to the cytoplasm. The enzyme catalyses aceneuramate = aldehydo-N-acetyl-D-mannosamine + pyruvate. Its pathway is amino-sugar metabolism; N-acetylneuraminate degradation; D-fructose 6-phosphate from N-acetylneuraminate: step 1/5. Catalyzes the reversible aldol cleavage of N-acetylneuraminic acid (sialic acid; Neu5Ac) to form pyruvate and N-acetylmannosamine (ManNAc) via a Schiff base intermediate. The chain is N-acetylneuraminate lyase from Clostridium perfringens (strain ATCC 13124 / DSM 756 / JCM 1290 / NCIMB 6125 / NCTC 8237 / Type A).